The primary structure comprises 636 residues: 1-deoxy-D-xylulose-5-phosphate synthase (636 aa).

Thiamine diphosphate is bound by residues histidine 77 and 118–120 (GHS). Aspartate 149 contributes to the Mg(2+) binding site. Thiamine diphosphate contacts are provided by residues 150 to 151 (GA), asparagine 178, tyrosine 290, and glutamate 375. Asparagine 178 provides a ligand contact to Mg(2+).

It belongs to the transketolase family. DXPS subfamily. As to quaternary structure, homodimer. Mg(2+) is required as a cofactor. Thiamine diphosphate serves as cofactor.

The enzyme catalyses D-glyceraldehyde 3-phosphate + pyruvate + H(+) = 1-deoxy-D-xylulose 5-phosphate + CO2. It participates in metabolic intermediate biosynthesis; 1-deoxy-D-xylulose 5-phosphate biosynthesis; 1-deoxy-D-xylulose 5-phosphate from D-glyceraldehyde 3-phosphate and pyruvate: step 1/1. Its function is as follows. Catalyzes the acyloin condensation reaction between C atoms 2 and 3 of pyruvate and glyceraldehyde 3-phosphate to yield 1-deoxy-D-xylulose-5-phosphate (DXP). The protein is 1-deoxy-D-xylulose-5-phosphate synthase of Cytophaga hutchinsonii (strain ATCC 33406 / DSM 1761 / CIP 103989 / NBRC 15051 / NCIMB 9469 / D465).